The following is an 861-amino-acid chain: Probable beta-glucosidase A (861 aa).

Residues 1-19 (MKLSILEAAALTAASVASA) form the signal peptide. N-linked (GlcNAc...) asparagine glycans are attached at residues Asn-62, Asn-212, and Asn-253. Asp-281 is an active-site residue. N-linked (GlcNAc...) asparagine glycosylation is found at Asn-316, Asn-323, Asn-355, Asn-524, Asn-543, Asn-565, Asn-669, and Asn-713. Residues 735–754 (PEGATDGSPQPRLPASGGPG) form a disordered region.

It belongs to the glycosyl hydrolase 3 family.

Its subcellular location is the secreted. The enzyme catalyses Hydrolysis of terminal, non-reducing beta-D-glucosyl residues with release of beta-D-glucose.. The protein operates within glycan metabolism; cellulose degradation. Functionally, beta-glucosidases are one of a number of cellulolytic enzymes involved in the degradation of cellulosic biomass. Catalyzes the last step releasing glucose from the inhibitory cellobiose. The polypeptide is Probable beta-glucosidase A (bglA) (Aspergillus terreus).